Consider the following 213-residue polypeptide: Orotate phosphoribosyltransferase (213 aa).

Lysine 26 is a binding site for 5-phospho-alpha-D-ribose 1-diphosphate. Position 34–35 (34–35) interacts with orotate; that stretch reads FF. 5-phospho-alpha-D-ribose 1-diphosphate-binding positions include 72–73, arginine 99, lysine 100, lysine 103, histidine 105, and 124–132; these read YK and DDVITAGTA. The orotate site is built by threonine 128 and arginine 156.

The protein belongs to the purine/pyrimidine phosphoribosyltransferase family. PyrE subfamily. Homodimer. The cofactor is Mg(2+).

The enzyme catalyses orotidine 5'-phosphate + diphosphate = orotate + 5-phospho-alpha-D-ribose 1-diphosphate. Its pathway is pyrimidine metabolism; UMP biosynthesis via de novo pathway; UMP from orotate: step 1/2. In terms of biological role, catalyzes the transfer of a ribosyl phosphate group from 5-phosphoribose 1-diphosphate to orotate, leading to the formation of orotidine monophosphate (OMP). This Alteromonas mediterranea (strain DSM 17117 / CIP 110805 / LMG 28347 / Deep ecotype) protein is Orotate phosphoribosyltransferase.